Reading from the N-terminus, the 370-residue chain is Glycerophosphodiester phosphodiesterase GDPD3 (370 aa).

The region spanning 35 to 322 (FVLMGHRGFG…DMVKDISEAI (288 aa)) is the GP-PDE domain.

It belongs to the glycerophosphoryl diester phosphodiesterase family. As to expression, expressed in flowers and siliques.

It catalyses the reaction a sn-glycero-3-phosphodiester + H2O = an alcohol + sn-glycerol 3-phosphate + H(+). This Arabidopsis thaliana (Mouse-ear cress) protein is Glycerophosphodiester phosphodiesterase GDPD3.